Consider the following 311-residue polypeptide: Porphobilinogen deaminase (311 aa).

The residue at position 241 (Cys-241) is an S-(dipyrrolylmethanemethyl)cysteine.

It belongs to the HMBS family. Monomer. Requires dipyrromethane as cofactor.

It carries out the reaction 4 porphobilinogen + H2O = hydroxymethylbilane + 4 NH4(+). It functions in the pathway porphyrin-containing compound metabolism; protoporphyrin-IX biosynthesis; coproporphyrinogen-III from 5-aminolevulinate: step 2/4. Its function is as follows. Tetrapolymerization of the monopyrrole PBG into the hydroxymethylbilane pre-uroporphyrinogen in several discrete steps. In Geobacillus sp. (strain WCH70), this protein is Porphobilinogen deaminase.